The following is a 481-amino-acid chain: tRNA-2-methylthio-N(6)-dimethylallyladenosine synthase (481 aa).

The MTTase N-terminal domain occupies 24–140 (KKLFIESYGC…LPNLLNEVEE (117 aa)). Residues cysteine 33, cysteine 69, cysteine 103, cysteine 178, cysteine 182, and cysteine 185 each coordinate [4Fe-4S] cluster. In terms of domain architecture, Radical SAM core spans 164–411 (MSNGITALVA…DLQQKHAWWR (248 aa)). In terms of domain architecture, TRAM spans 413-476 (EDFIGQTVEV…SGTLKGEAVG (64 aa)).

This sequence belongs to the methylthiotransferase family. MiaB subfamily. As to quaternary structure, monomer. The cofactor is [4Fe-4S] cluster.

Its subcellular location is the cytoplasm. It catalyses the reaction N(6)-dimethylallyladenosine(37) in tRNA + (sulfur carrier)-SH + AH2 + 2 S-adenosyl-L-methionine = 2-methylsulfanyl-N(6)-dimethylallyladenosine(37) in tRNA + (sulfur carrier)-H + 5'-deoxyadenosine + L-methionine + A + S-adenosyl-L-homocysteine + 2 H(+). In terms of biological role, catalyzes the methylthiolation of N6-(dimethylallyl)adenosine (i(6)A), leading to the formation of 2-methylthio-N6-(dimethylallyl)adenosine (ms(2)i(6)A) at position 37 in tRNAs that read codons beginning with uridine. This is tRNA-2-methylthio-N(6)-dimethylallyladenosine synthase from Flavobacterium psychrophilum (strain ATCC 49511 / DSM 21280 / CIP 103535 / JIP02/86).